An 81-amino-acid polypeptide reads, in one-letter code: Neuronatin (81 aa).

This sequence belongs to the neuronatin family.

May participate in the maintenance of segment identity in the hindbrain and pituitary development, and maturation or maintenance of the overall structure of the nervous system. May function as a regulatory subunit of ion channels. The polypeptide is Neuronatin (NNAT) (Mesocricetus auratus (Golden hamster)).